The chain runs to 780 residues: Tyrosine-protein phosphatase non-receptor type 12 (780 aa).

The residue at position 1 (methionine 1) is an N-acetylmethionine. At serine 19 the chain carries Phosphoserine. The 266-residue stretch at 28 to 293 (FARDFMRLRR…ELVHRAIAQL (266 aa)) folds into the Tyrosine-protein phosphatase domain. Substrate is bound by residues arginine 36, 63–67 (RYKDI), aspartate 199, 231–237 (CSAGCGR), and glutamine 278. Catalysis depends on cysteine 231, which acts as the Phosphocysteine intermediate. 4 positions are modified to phosphoserine: serine 332, serine 435, serine 449, and serine 468. An interaction with TGFB1I1 region spans residues 345–438 (VEGDAKEEIL…KLERNLSFEI (94 aa)). The span at 502–519 (QSNKVSVTPPEESQNSDT) shows a compositional bias: polar residues. Disordered regions lie at residues 502–639 (QSNK…STES), 657–725 (GTTH…EKCD), and 744–780 (SDKR…SEWT). Phosphothreonine occurs at positions 509 and 519. Residues 521-533 (PRPDRLPLDEKGH) are compositionally biased toward basic and acidic residues. Polar residues-rich tracts occupy residues 552–577 (EGNS…TQVE) and 587–601 (TSPL…TNPL). Residue serine 567 is modified to Phosphoserine. Threonine 569 is subject to Phosphothreonine. Phosphoserine occurs at positions 571 and 596. Position 598 is a phosphothreonine (threonine 598). Positions 602 to 613 (HSDDSDSDERNS) are enriched in basic and acidic residues. A phosphoserine mark is found at serine 603, serine 606, serine 608, and serine 613. A compositionally biased stretch (low complexity) spans 622 to 639 (TNISTASATVSAATSTES). Serine 673 and serine 689 each carry phosphoserine. The segment covering 690-703 (EHNTPVRSEWSELQ) has biased composition (polar residues). Threonine 693 is subject to Phosphothreonine. Composition is skewed to basic and acidic residues over residues 704 to 725 (SQER…EKCD) and 771 to 780 (GPRDPPSEWT).

This sequence belongs to the protein-tyrosine phosphatase family. Non-receptor class 4 subfamily. Interacts with TGFB1I1. Interacts with PSTPIP1. Interacts with PTK2B/PYK2. Interacts with LPXN. Interacts with SORBS2; this interaction greatly enhances WASF1 dephosphorylation and might mediate partial translocation to focal adhesion sites. In terms of processing, phosphorylated by STK24/MST3 and this results in inhibition of its activity.

Its subcellular location is the cytoplasm. It localises to the cell junction. The protein localises to the focal adhesion. The protein resides in the cell projection. It is found in the podosome. The catalysed reaction is O-phospho-L-tyrosyl-[protein] + H2O = L-tyrosyl-[protein] + phosphate. In terms of biological role, dephosphorylates a range of proteins, and thereby regulates cellular signaling cascades. Dephosphorylates cellular tyrosine kinases, such as ERBB2 and PTK2B/PYK2, and thereby regulates signaling via ERBB2 and PTK2B/PYK2. Selectively dephosphorylates ERBB2 phosphorylated at 'Tyr-1112', 'Tyr-1196', and/or 'Tyr-1248'. The polypeptide is Tyrosine-protein phosphatase non-receptor type 12 (PTPN12) (Homo sapiens (Human)).